A 225-amino-acid polypeptide reads, in one-letter code: Peptidyl-tRNA hydrolase (225 aa).

Y14 lines the tRNA pocket. The Proton acceptor role is filled by H19. TRNA-binding residues include F64, N66, and N112. Residues A184–R225 are disordered. Residues A198–A209 are compositionally biased toward low complexity. The span at P211–R225 shows a compositional bias: basic and acidic residues.

Belongs to the PTH family. In terms of assembly, monomer.

Its subcellular location is the cytoplasm. The enzyme catalyses an N-acyl-L-alpha-aminoacyl-tRNA + H2O = an N-acyl-L-amino acid + a tRNA + H(+). In terms of biological role, hydrolyzes ribosome-free peptidyl-tRNAs (with 1 or more amino acids incorporated), which drop off the ribosome during protein synthesis, or as a result of ribosome stalling. Its function is as follows. Catalyzes the release of premature peptidyl moieties from peptidyl-tRNA molecules trapped in stalled 50S ribosomal subunits, and thus maintains levels of free tRNAs and 50S ribosomes. In Cereibacter sphaeroides (strain ATCC 17023 / DSM 158 / JCM 6121 / CCUG 31486 / LMG 2827 / NBRC 12203 / NCIMB 8253 / ATH 2.4.1.) (Rhodobacter sphaeroides), this protein is Peptidyl-tRNA hydrolase.